The chain runs to 548 residues: Membrane protein insertase YidC (548 aa).

A helical membrane pass occupies residues 6–26 (NLLVIALLFVSFMIWQAWEQD). Residues 28–55 (NPQPQAQQTTQTTTTAAGSAADQGVPAS) are disordered. The span at 30 to 50 (QPQAQQTTQTTTTAAGSAADQ) shows a compositional bias: low complexity. 4 helical membrane-spanning segments follow: residues 350–370 (FVGN…GIMY), 420–440 (LGGC…YYML), 458–478 (LSAQ…MFFI), and 499–519 (PVIF…YYIV).

It belongs to the OXA1/ALB3/YidC family. Type 1 subfamily. Interacts with the Sec translocase complex via SecD. Specifically interacts with transmembrane segments of nascent integral membrane proteins during membrane integration.

It is found in the cell inner membrane. Functionally, required for the insertion and/or proper folding and/or complex formation of integral membrane proteins into the membrane. Involved in integration of membrane proteins that insert both dependently and independently of the Sec translocase complex, as well as at least some lipoproteins. Aids folding of multispanning membrane proteins. The chain is Membrane protein insertase YidC from Escherichia fergusonii (strain ATCC 35469 / DSM 13698 / CCUG 18766 / IAM 14443 / JCM 21226 / LMG 7866 / NBRC 102419 / NCTC 12128 / CDC 0568-73).